The chain runs to 509 residues: Cytochrome P450 monooxygenase LUC2 (509 aa).

A helical transmembrane segment spans residues 30 to 50 (TKVLVTFLTIVIIAPRVFTVI). C456 lines the heme pocket.

This sequence belongs to the cytochrome P450 family. Heme serves as cofactor.

The protein resides in the membrane. It functions in the pathway mycotoxin biosynthesis. Cytochrome P450 monooxygenase; part of the gene cluster that mediates the biosynthesis of the mycotoxin lucilactaene and the lucilactaene-related compound NG-391 that act as cell cycle inhibitors with potent growth inhibitory activity against malarial parasites, moderate growth inhibitory activity against cancer cells, and no activity against bacteria and fungi. Within the pathway, LUC2 performs C-20 methyl group hydroxylation of several intermediates. LUC2 does not perform the full oxidation of the C-20 methyl group into carboxylic acid, which is a prerequisite for the final methylation step. The pathway begins with the hybrid PKS-NRPS synthetase LUC5 which is responsible for the condensation of one acetyl-coenzyme A (CoA) unit with six malonyl-CoA units and the amide linkage of the arising heptaketide and homoserine, subsequently releasing the first intermediate prelucilactaene B. Both the cytochrome P450 monooxygenase LUC2 and the hydrolase LUC6 function in parallel in modification of prelucilactaene B. LUC6 may catalyze the 2-pyrrolidone ring formation to form prelucilactaene C from prelucilactaene B, followed by C-15 hydroxylation by the same enzyme to give prelucilactaene D, which is then converted to prelucilactaene E by epoxidation, and finally to prelucilactaene F by cyclization. Prelucilactane D, prelucilactaene E, and prelucilactaene F can be converted to dihydrolucilactaene, NG391, and lucilactaene, respectively, via C-20 methyl group hydroxylation by the cytochrome P450 monooxygenase LUC2. However, LUC2, unlike FUS8 in fusarin C biosynthesis, is not enough for the full oxidation of the C-20 methyl group into carboxylic acid, which is a prerequisite for the final methylation step. The aldehyde dehydrogenase LUC3 is involved in the biosynthesis by further oxidation of the C-20 alcoholic analog prelucilactaene G into a carboxylic derivative. This unidentified carboxylic derivative may be converted to demethyllucilactaene. As the last step, the methyltransferase LUC1 methylates the hydroxyl group at C-21 of demethyllucilactaene to generate lucilactaene. This is Cytochrome P450 monooxygenase LUC2 from Fusarium sp.